The following is a 578-amino-acid chain: Arginine--tRNA ligase (578 aa).

The 'HIGH' region motif lies at 127-137 (PNLAKEMHVGH).

Belongs to the class-I aminoacyl-tRNA synthetase family. As to quaternary structure, monomer.

Its subcellular location is the cytoplasm. It catalyses the reaction tRNA(Arg) + L-arginine + ATP = L-arginyl-tRNA(Arg) + AMP + diphosphate. The protein is Arginine--tRNA ligase of Pseudomonas savastanoi pv. phaseolicola (strain 1448A / Race 6) (Pseudomonas syringae pv. phaseolicola (strain 1448A / Race 6)).